We begin with the raw amino-acid sequence, 1223 residues long: DNA-directed RNA polymerase subunit beta' (1223 aa).

The Zn(2+) site is built by C60, C62, C75, and C78. Residues D449, D451, and D453 each contribute to the Mg(2+) site. Zn(2+)-binding residues include C818, C892, C899, and C902.

Belongs to the RNA polymerase beta' chain family. As to quaternary structure, the RNAP catalytic core consists of 2 alpha, 1 beta, 1 beta' and 1 omega subunit. When a sigma factor is associated with the core the holoenzyme is formed, which can initiate transcription. Mg(2+) is required as a cofactor. It depends on Zn(2+) as a cofactor.

It catalyses the reaction RNA(n) + a ribonucleoside 5'-triphosphate = RNA(n+1) + diphosphate. DNA-dependent RNA polymerase catalyzes the transcription of DNA into RNA using the four ribonucleoside triphosphates as substrates. This Lactobacillus gasseri (strain ATCC 33323 / DSM 20243 / BCRC 14619 / CIP 102991 / JCM 1131 / KCTC 3163 / NCIMB 11718 / NCTC 13722 / AM63) protein is DNA-directed RNA polymerase subunit beta'.